The primary structure comprises 517 residues: ATP synthase subunit alpha (517 aa).

An ATP-binding site is contributed by Gly174–Thr181.

This sequence belongs to the ATPase alpha/beta chains family. F-type ATPases have 2 components, CF(1) - the catalytic core - and CF(0) - the membrane proton channel. CF(1) has five subunits: alpha(3), beta(3), gamma(1), delta(1), epsilon(1). CF(0) has three main subunits: a(1), b(2) and c(9-12). The alpha and beta chains form an alternating ring which encloses part of the gamma chain. CF(1) is attached to CF(0) by a central stalk formed by the gamma and epsilon chains, while a peripheral stalk is formed by the delta and b chains.

The protein localises to the cell inner membrane. It catalyses the reaction ATP + H2O + 4 H(+)(in) = ADP + phosphate + 5 H(+)(out). Its function is as follows. Produces ATP from ADP in the presence of a proton gradient across the membrane. The alpha chain is a regulatory subunit. This is ATP synthase subunit alpha from Variovorax paradoxus (strain S110).